The chain runs to 161 residues: NADH:FMN oxidoreductase (161 aa).

Residues D30, A37–T40, C54–T61, A88, R94, and F151 each bind FMN.

This sequence belongs to the non-flavoprotein flavin reductase family.

The protein localises to the cytoplasm. It catalyses the reaction FMNH2 + NAD(+) = FMN + NADH + 2 H(+). The catalysed reaction is FADH2 + NAD(+) = FAD + NADH + 2 H(+). Its pathway is sulfur metabolism; dibenzothiophene degradation. Functionally, an NADH:FMN oxidoreductase which supplies reduced FMN for the '4S' desulfurization pathway that removes covalently bound sulfur from dibenzothiophene (DBT) without breaking carbon-carbon bonds. Can also use FAD. Provides DszC and probably also DszA (DBT-monooxygenase and DBTO2-monooxygenase respectively) with reduced flavin (FMN and/or FAD). The chain is NADH:FMN oxidoreductase from Mycolicibacterium goodii (Mycobacterium goodii).